A 540-amino-acid chain; its full sequence is Acrosin-binding protein (540 aa).

Positions 1–24 (MKLAASFLLMLLEVLLLPETPLSA) are cleaved as a signal peptide. Residues 25–104 (EEALASTPGS…ASWFESFCQF (80 aa)) are pro-ACR binding. Residues 25–272 (EEALASTPGS…NPSFFTPRVR (248 aa)) constitute a propeptide, removed in mature form. The segment at 181–266 (SLSLGGKEQQ…SKSLSSNPSF (86 aa)) is disordered. The segment covering 195–213 (LGLEQQHKQEQIQEHKLEE) has biased composition (basic and acidic residues). Positions 214–241 (AQEQEEQEEEEEEEEAKQEEGQGTEEGL) are enriched in acidic residues. Polar residues predominate over residues 256-266 (QSKSLSSNPSF). The segment at 316-424 (LPHTETLMVL…NQAKIPEKGR (109 aa)) is pro-ACR binding.

As to quaternary structure, binds pro-ACR. Does not bind the mature form of ACR. Binds pro-ACR. Does not bind mature form of ACR. In terms of processing, the N-terminus is blocked. Phosphorylated on Tyr residues in capacitated sperm. Post-translationally, synthesized as a 60-kDa precursor, the 32-kDa mature form is post-translationally produced by the removal of the N-terminal half of the precursor during sperm maturation in the testis and/or epididymis.

It localises to the cytoplasmic vesicle. It is found in the secretory vesicle. The protein localises to the acrosome. In terms of biological role, acrosomal protein that maintains proacrosin (pro-ACR) as an enzymatically inactive zymogen in the acrosome. Involved also in the acrosome formation. Functionally, maintains pro-ACR as an enzymatically inactive zymogen in the acrosome until acrosomal exocytosis. Partially also contributes to the assembly of acrosomal proteins to form an acrosomal granule. Rodent specific isoform that participates in the formation of the acrosomal granule into the center of the acrosomal vesicle during early spermiogenesis. In the fertilization process promotes ACR release from the acrosome during acrosomal exocytosis. This is Acrosin-binding protein from Rattus norvegicus (Rat).